Consider the following 1501-residue polypeptide: Pleiotropic ABC efflux transporter of multiple drugs CDR1 (1501 aa).

The segment at 1–30 (MSDSKMSSQDESKLEKAISQDSSSENHSIN) is disordered. The Cytoplasmic portion of the chain corresponds to 1-513 (MSDSKMSSQD…NFLRMKGDPS (513 aa)). The NBD1 stretch occupies residues 2–512 (SDSKMSSQDE…RNFLRMKGDP (511 aa)). Over residues 8–18 (SQDESKLEKAI) the composition is skewed to basic and acidic residues. One can recognise an ABC transporter 1 domain in the interval 150 to 404 (LATEGFRHFQ…FEKMGWKCPQ (255 aa)). A helical transmembrane segment spans residues 514 to 534 (IPIFSVFGQLVMGLILSSVFY). Topologically, residues 535 to 548 (NLSQTTGSFYYRGA) are extracellular. Residues 549-569 (AMFFAVLFNAFSSLLEIMSLF) traverse the membrane as a helical segment. The Cytoplasmic segment spans residues 570 to 597 (EARPIVEKHKKYALYRPSADALASIISE). Residues 598-618 (LPVKLAMSMSFNFVFYFMVNF) form a helical membrane-spanning segment. Over 619–622 (RRNP) the chain is Extracellular. A helical membrane pass occupies residues 623 to 643 (GRFFFYWLMCIWCTFVMSHLF). The Cytoplasmic portion of the chain corresponds to 644-654 (RSIGAVSTSIS). A helical membrane pass occupies residues 655–675 (GAMTPATVLLLAMVIYTGFVI). Topologically, residues 676–764 (PTPSMLGWSR…QYYNSHKWRN (89 aa)) are extracellular. Residues 765–785 (LGITIGFAVFFLAIYIALTEF) traverse the membrane as a helical segment. At 786 to 1195 (NKGAMQKGEI…TIVQDWRSPG (410 aa)) the chain is on the cytoplasmic side. The interval 786–1195 (NKGAMQKGEI…TIVQDWRSPG (410 aa)) is NBD2. In terms of domain architecture, ABC transporter 2 spans 859–1103 (FFWRDLTYQV…MINYFEKYGA (245 aa)). An ATP-binding site is contributed by 895–902 (GASGAGKT). Residues 1137–1164 (RNSSEYQAVREEINRMEAELSKLPRDND) adopt a coiled-coil conformation. The chain crosses the membrane as a helical span at residues 1196–1216 (YIYSKIFLVVSAALFNGFSFF). The Extracellular segment spans residues 1217–1229 (KAKNNMQGLQNQM). The helical transmembrane segment at 1230–1250 (FSVFMFFIPFNTLVQQMLPYF) threads the bilayer. Residues 1251–1280 (VKQRDVYEVREAPSRTFSWFAFIAGQITSE) are Cytoplasmic-facing. The chain crosses the membrane as a helical span at residues 1281 to 1301 (IPYQVAVGTIAFFCWYYPLGL). The Extracellular segment spans residues 1302 to 1314 (YNNATPTDSVNPR). A helical membrane pass occupies residues 1315–1335 (GVLMWMLVTAFYVYTATMGQL). The Cytoplasmic segment spans residues 1336-1355 (CMSFSELADNAANLATLLFT). The chain crosses the membrane as a helical span at residues 1356 to 1376 (MCLNFCGVLAGPDVLPGFWIF). Residues 1377 to 1466 (MYRCNPFTYL…NSLYSERWRN (90 aa)) are Extracellular-facing. The chain crosses the membrane as a helical span at residues 1467 to 1487 (FGIFIAFIAINIILTVIFYWL). The Cytoplasmic segment spans residues 1488–1501 (ARVPKGNREKKNKK).

It belongs to the ABC transporter superfamily.

It localises to the cell membrane. Disulfiram reverses CDR1-mediated drug resistance by interaction with both ATP and substrate-binding sites of the transporter and may be useful for antifungal therapy. In terms of biological role, pleiotropic ABC efflux transporter that confers resistance to numerous chemicals including anisomycin, cycloheximide, fluconazole, miconazole, ketoconazole, itriconazole, nystatin, terbinafine, amorolfine, brefeldin A, amphotericin B, fluphenazine, as well as estrogen. Plays a role in farnesol-induced apoptotic process through glutathione efflux activity. Mediates in-to-out translocation of membrane phospholipids including aminophospholipids and thus regulates asymmetric distribution of phosphatidylethanolamine. Exhibits nucleoside triphosphatase activity. The sequence is that of Pleiotropic ABC efflux transporter of multiple drugs CDR1 (CDR1) from Candida albicans (strain SC5314 / ATCC MYA-2876) (Yeast).